Reading from the N-terminus, the 699-residue chain is Chitinase A1 (699 aa).

A signal peptide spans 1 to 41 (MINLNKHTAFKKTAKFFLGLSLLLSVIVPSFALQPATAEAA). The 411-residue stretch at 44-454 (YKIVGYYPSW…NKLKADLPTG (411 aa)) folds into the GH18 domain. Chitin contacts are provided by residues 135-136 (DQ) and 162-165 (GGWT). The active-site Proton donor is the Glu204. Chitin is bound by residues Tyr205, 277–280 (MTYD), and Trp433. A disordered region spans residues 449–471 (ADLPTGGTVPPVDTTAPSVPGNA). Residues 452–465 (PTGGTVPPVDTTAP) show a composition bias toward low complexity. 2 Fibronectin type-III domains span residues 467–553 (VPGN…TAQP) and 562–647 (APTN…TAAE).

Belongs to the glycosyl hydrolase 18 family. Chitinase class II subfamily.

The catalysed reaction is Random endo-hydrolysis of N-acetyl-beta-D-glucosaminide (1-&gt;4)-beta-linkages in chitin and chitodextrins.. This chain is Chitinase A1 (chiA1), found in Niallia circulans (Bacillus circulans).